The chain runs to 268 residues: MATNTSTLNSTETVLRTENLNVYYGKFLALQNIWLDIPKNKVTAFIGPSGCGKSTLLRCYNRLNDLIESFRAEGKIFYYSKNLYAQDIDPVEVRRRIGMVFQRPNPFPKSIYDNIAFGAKINGYKGNMDELVERSLRKAALWDEVKDKLRQSGASLSGGQQQRLCIARAIAVQPEIILMDEPCSALDPISTLRVEELIHELKEQYTIVIVTHNMQQAARVSDRTAFFNVRPTETGGRIGYLVEYDATESIFNNPKQEDTRDYVSGRFG.

Positions 15-254 constitute an ABC transporter domain; it reads LRTENLNVYY…DATESIFNNP (240 aa). 47–54 provides a ligand contact to ATP; that stretch reads GPSGCGKS.

Belongs to the ABC transporter superfamily. Phosphate importer (TC 3.A.1.7) family. The complex is composed of two ATP-binding proteins (PstB), two transmembrane proteins (PstC and PstA) and a solute-binding protein (PstS).

The protein localises to the cell inner membrane. It catalyses the reaction phosphate(out) + ATP + H2O = ADP + 2 phosphate(in) + H(+). Part of the ABC transporter complex PstSACB involved in phosphate import. Responsible for energy coupling to the transport system. The polypeptide is Phosphate import ATP-binding protein PstB 3 (Nostoc sp. (strain PCC 7120 / SAG 25.82 / UTEX 2576)).